The chain runs to 169 residues: Phosphopantetheine adenylyltransferase (169 aa).

Substrate is bound at residue Ser-10. ATP-binding positions include 10–11 (SF) and His-18. Substrate is bound by residues Lys-42, Leu-74, and Arg-88. ATP-binding positions include 89-91 (GLR), Glu-99, and 124-130 (YAFLSSS).

The protein belongs to the bacterial CoaD family. In terms of assembly, homohexamer. It depends on Mg(2+) as a cofactor.

Its subcellular location is the cytoplasm. It catalyses the reaction (R)-4'-phosphopantetheine + ATP + H(+) = 3'-dephospho-CoA + diphosphate. The protein operates within cofactor biosynthesis; coenzyme A biosynthesis; CoA from (R)-pantothenate: step 4/5. Functionally, reversibly transfers an adenylyl group from ATP to 4'-phosphopantetheine, yielding dephospho-CoA (dPCoA) and pyrophosphate. The protein is Phosphopantetheine adenylyltransferase of Geobacillus sp. (strain WCH70).